The following is a 175-amino-acid chain: Inorganic pyrophosphatase (175 aa).

3 residues coordinate substrate: Lys30, Arg44, and Tyr56. Residues Asp66, Asp71, and Asp103 each coordinate Mg(2+). Tyr142 contributes to the substrate binding site.

It belongs to the PPase family. Homohexamer. Mg(2+) serves as cofactor.

It localises to the cytoplasm. The enzyme catalyses diphosphate + H2O = 2 phosphate + H(+). In terms of biological role, catalyzes the hydrolysis of inorganic pyrophosphate (PPi) forming two phosphate ions. This is Inorganic pyrophosphatase from Pseudomonas aeruginosa (strain ATCC 15692 / DSM 22644 / CIP 104116 / JCM 14847 / LMG 12228 / 1C / PRS 101 / PAO1).